Reading from the N-terminus, the 116-residue chain is U30-theraphotoxin-Cg1a (116 aa).

The signal sequence occupies residues 1-17 (MKLCVLTIASLLVTVTS). The propeptide occupies 18–53 (LETQKEIAEGSELTREETPSLVEHKEDEAAAASEKR). A disordered region spans residues 24 to 46 (IAEGSELTREETPSLVEHKEDEA). 4 disulfide bridges follow: Cys-55/Cys-69, Cys-62/Cys-75, Cys-66/Cys-112, and Cys-68/Cys-88.

It belongs to the neurotoxin 03 (Tx2) family. 02 subfamily. HNTX-XV sub-subfamily. Expressed by the venom gland.

The protein localises to the secreted. Its function is as follows. Probable ion channel inhibitor. The protein is U30-theraphotoxin-Cg1a of Chilobrachys guangxiensis (Chinese earth tiger tarantula).